A 567-amino-acid chain; its full sequence is Phenylalanine ammonia-lyase (567 aa).

Tyr78 serves as the catalytic Proton donor/acceptor. A cross-link (5-imidazolinone (Ala-Gly)) is located at residues 167 to 169; that stretch reads ASG. Ser168 is modified (2,3-didehydroalanine (Ser)). 7 residues coordinate (E)-cinnamate: Asn223, Gln311, Arg317, Asn347, Lys419, Glu448, and Asn451.

It belongs to the PAL/histidase family. In terms of assembly, homotetramer. In terms of processing, contains an active site 4-methylidene-imidazol-5-one (MIO), which is formed autocatalytically by cyclization and dehydration of residues Ala-Ser-Gly.

Its subcellular location is the cytoplasm. It catalyses the reaction L-phenylalanine = (E)-cinnamate + NH4(+). It participates in phenylpropanoid metabolism; trans-cinnamate biosynthesis; trans-cinnamate from L-phenylalanine: step 1/1. In terms of biological role, catalyzes the non-oxidative deamination of L-phenylalanine to form trans-cinnamic acid, the first step in the phenylpropanoid pathway. The sequence is that of Phenylalanine ammonia-lyase from Trichormus variabilis (strain ATCC 29413 / PCC 7937) (Anabaena variabilis).